An 833-amino-acid polypeptide reads, in one-letter code: Major vault protein (833 aa).

MVP repeat units follow at residues 54 to 118, 119 to 170, 171 to 223, 224 to 278, 280 to 328, 329 to 380, and 381 to 433; these read RHYC…QLIP, PNTG…TVIY, PNTA…TMLS, DLKA…VSLS, KEYV…LVVG, KEEA…MALD, and KNEG…SIQT.

In terms of assembly, the vault ribonucleoprotein particle is a huge (400 A x 670 A) cage structure of 12.9 MDa. It consists of a dimer of half-vaults, with each half-vault comprising 39 identical major vault protein (MVP) chains, PARP4 and one or more vault RNAs (vRNAs).

It localises to the cytoplasm. The protein resides in the nucleus. Functionally, required for normal vault structure. Vaults are multi-subunit structures that may act as scaffolds for proteins involved in signal transduction. Vaults may also play a role in nucleo-cytoplasmic transport. This Leishmania infantum protein is Major vault protein.